Here is a 370-residue protein sequence, read N- to C-terminus: MKYQLQKTDGRARLGKLIFERGLVDTPAFMPVGTYGSVKSMTPDEITETGAQIILGNTFHLWLRPGQDVIKLHGDLHDFMQWQGPILTDSGGFQVFSLNSMRKIEEKGVSFRHPLNGSEIFLSPEKSMEIQLDLGSDIVMVFDECPPYPSDLIYMKSSMEMSLRWANRSREHFNNLNNKNALFGIIQGGLSLELRETSLQGLLQIGFDGYAIGGLAVGEPKEEMYRVLDFLCPRIPDNKPRYLMGVGKPENLVEGVRRGIDMFDCVMPTRNARNGHLFVTHGVIKIRNTRYKTDISPLDPDCDCYTCRHYSRAYLHHLDRCNEILGARLNSIHNVRYYQRLMADLRHAIYEERLECFVEEFYKKIGLSIS.

The active-site Proton acceptor is the aspartate 89. Substrate is bound by residues 89-93 (DSGGF), aspartate 143, glutamine 187, and glycine 214. The RNA binding stretch occupies residues 245–251 (GVGKPEN). The Nucleophile role is filled by aspartate 264. An RNA binding; important for wobble base 34 recognition region spans residues 269–273 (TRNAR). The Zn(2+) site is built by cysteine 302, cysteine 304, cysteine 307, and histidine 333.

The protein belongs to the queuine tRNA-ribosyltransferase family. In terms of assembly, homodimer. Within each dimer, one monomer is responsible for RNA recognition and catalysis, while the other monomer binds to the replacement base PreQ1. Zn(2+) serves as cofactor.

It catalyses the reaction 7-aminomethyl-7-carbaguanine + guanosine(34) in tRNA = 7-aminomethyl-7-carbaguanosine(34) in tRNA + guanine. It participates in tRNA modification; tRNA-queuosine biosynthesis. Catalyzes the base-exchange of a guanine (G) residue with the queuine precursor 7-aminomethyl-7-deazaguanine (PreQ1) at position 34 (anticodon wobble position) in tRNAs with GU(N) anticodons (tRNA-Asp, -Asn, -His and -Tyr). Catalysis occurs through a double-displacement mechanism. The nucleophile active site attacks the C1' of nucleotide 34 to detach the guanine base from the RNA, forming a covalent enzyme-RNA intermediate. The proton acceptor active site deprotonates the incoming PreQ1, allowing a nucleophilic attack on the C1' of the ribose to form the product. After dissociation, two additional enzymatic reactions on the tRNA convert PreQ1 to queuine (Q), resulting in the hypermodified nucleoside queuosine (7-(((4,5-cis-dihydroxy-2-cyclopenten-1-yl)amino)methyl)-7-deazaguanosine). The protein is Queuine tRNA-ribosyltransferase of Hamiltonella defensa subsp. Acyrthosiphon pisum (strain 5AT).